Consider the following 336-residue polypeptide: CMP-sialic acid transporter (336 aa).

At 1-9 (MAPARENVS) the chain is on the cytoplasmic side. The chain crosses the membrane as a helical span at residues 10–30 (LFFKLYCLTVMTLVAAAYTVA). The Lumenal segment spans residues 31 to 45 (LRYTRTTAEELYFST). Residues 46–64 (TAVCITEVIKLLISVGLLA) traverse the membrane as a helical segment. K55 contacts CMP-N-acetyl-beta-neuraminate. Residues 65 to 87 (KETGSLGRFKASLSENVLGSPKE) lie on the Cytoplasmic side of the membrane. A helical transmembrane segment spans residues 88–108 (LAKLSVPSLVYAVQNNMAFLA). 101 to 102 (QN) contacts CMP-N-acetyl-beta-neuraminate. Over 109 to 114 (LSNLDA) the chain is Lumenal. Residues 115–135 (AVYQVTYQLKIPCTALCTVLM) traverse the membrane as a helical segment. A CMP-N-acetyl-beta-neuraminate-binding site is contributed by 117–124 (YQVTYQLK). The Cytoplasmic segment spans residues 136-141 (LNRTLS). Residues 142-160 (KLQWISVFMLCGGVTLVQW) form a helical membrane-spanning segment. At 161–175 (KPAQATKVVVAQNPL) the chain is on the lumenal side. A helical membrane pass occupies residues 176-196 (LGFGAIAIAVLCSGFAGVYFE). Residue S188 participates in CMP-N-acetyl-beta-neuraminate binding. Over 197-209 (KVLKSSDTSLWVR) the chain is Cytoplasmic. A CMP-N-acetyl-beta-neuraminate-binding site is contributed by 210-214 (NIQMY). Residues 210-228 (NIQMYLSGIVVTLAGTYLS) form a helical membrane-spanning segment. The Lumenal segment spans residues 229–243 (DGAEIQEKGFFYGYT). A helical membrane pass occupies residues 244-262 (YYVWFVIFLASVGGLYTSV). Over 263–269 (VVKYTDN) the chain is Cytoplasmic. The helical transmembrane segment at 270–288 (IMKGFSAAAAIVLSTIASV) threads the bilayer. K272 lines the CMP-N-acetyl-beta-neuraminate pocket. Over 289 to 296 (LLFGLQIT) the chain is Lumenal. Residues 297–315 (LSFALGALLVCVSIYLYGL) form a helical membrane-spanning segment. The Cytoplasmic segment spans residues 316–336 (PRQDTTSIQQEATSKERIIGV). The interval 316–336 (PRQDTTSIQQEATSKERIIGV) is disordered.

Belongs to the nucleotide-sugar transporter family. SLC35A subfamily. Monomer. Ubiquitous. Found in all the tissues examined including skeletal muscle, brain, heart, liver, kidney and spleen.

The protein resides in the golgi apparatus membrane. It catalyses the reaction CMP-N-acetyl-beta-neuraminate(in) + CMP(out) = CMP-N-acetyl-beta-neuraminate(out) + CMP(in). The catalysed reaction is CMP-N-acetyl-beta-neuraminate(in) + AMP(out) = CMP-N-acetyl-beta-neuraminate(out) + AMP(in). It carries out the reaction CDP-L-ribitol(in) + CDP(out) = CDP-L-ribitol(out) + CDP(in). The enzyme catalyses UMP(out) + CMP-N-acetyl-beta-neuraminate(in) = UMP(in) + CMP-N-acetyl-beta-neuraminate(out). In terms of biological role, transports CMP-sialic acid from the cytosol into the Golgi apparatus, functioning as an antiporter that exchanges CMP-sialic acid for CMP. Binds both CMP-sialic acid and free CMP, but has higher affinity for free CMP. Also able to exchange CMP-sialic acid for AMP and UMP. Also mediates the transport of CDP-ribitol. The protein is CMP-sialic acid transporter of Mus musculus (Mouse).